Consider the following 101-residue polypeptide: Urease subunit beta (101 aa).

It belongs to the urease beta subunit family. In terms of assembly, heterotrimer of UreA (gamma), UreB (beta) and UreC (alpha) subunits. Three heterotrimers associate to form the active enzyme.

It is found in the cytoplasm. It catalyses the reaction urea + 2 H2O + H(+) = hydrogencarbonate + 2 NH4(+). It functions in the pathway nitrogen metabolism; urea degradation; CO(2) and NH(3) from urea (urease route): step 1/1. This chain is Urease subunit beta, found in Rhodopseudomonas palustris (strain ATCC BAA-98 / CGA009).